The following is a 710-amino-acid chain: Integrator complex subunit 10 (710 aa).

Residues I366–S393 form a disordered region. Basic and acidic residues predominate over residues L372–S381.

Belongs to the Integrator subunit 10 family. Component of the Integrator complex, composed of core subunits INTS1, INTS2, INTS3, INTS4, INTS5, INTS6, INTS7, INTS8, INTS9/RC74, INTS10, INTS11/CPSF3L, INTS12, INTS13, INTS14 and INTS15. The core complex associates with protein phosphatase 2A subunits PPP2CA and PPP2R1A, to form the Integrator-PP2A (INTAC) complex. INTS10 is part of the tail subcomplex, composed of INTS10, INTS13, INTS14 and INTS15.

It localises to the nucleus. Functionally, component of the integrator complex, a multiprotein complex that terminates RNA polymerase II (Pol II) transcription in the promoter-proximal region of genes. The integrator complex provides a quality checkpoint during transcription elongation by driving premature transcription termination of transcripts that are unfavorably configured for transcriptional elongation: the complex terminates transcription by (1) catalyzing dephosphorylation of the C-terminal domain (CTD) of Pol II subunit POLR2A/RPB1 and SUPT5H/SPT5, (2) degrading the exiting nascent RNA transcript via endonuclease activity and (3) promoting the release of Pol II from bound DNA. The integrator complex is also involved in terminating the synthesis of non-coding Pol II transcripts, such as enhancer RNAs (eRNAs), small nuclear RNAs (snRNAs), telomerase RNAs and long non-coding RNAs (lncRNAs). This Gallus gallus (Chicken) protein is Integrator complex subunit 10 (INTS10).